Consider the following 99-residue polypeptide: UPF0125 protein BU253 (99 aa).

The protein belongs to the UPF0125 (RnfH) family.

This chain is UPF0125 protein BU253, found in Buchnera aphidicola subsp. Acyrthosiphon pisum (strain APS) (Acyrthosiphon pisum symbiotic bacterium).